The primary structure comprises 447 residues: Chorismate synthase, chloroplastic (447 aa).

The tract at residues 1 to 24 is disordered; it reads MASSLSTKPFLSGSRRRSTTDGSG. The N-terminal 57 residues, 1-57, are a transit peptide targeting the chloroplast; sequence MASSLSTKPFLSGSRRRSTTDGSGWSYFQTSDLRQLSNQSVQISVRRQTAPLKLVVQ.

The protein belongs to the chorismate synthase family. As to quaternary structure, homotetramer. FMNH2 is required as a cofactor. The N-terminus is blocked.

It is found in the plastid. Its subcellular location is the chloroplast. The catalysed reaction is 5-O-(1-carboxyvinyl)-3-phosphoshikimate = chorismate + phosphate. The protein operates within metabolic intermediate biosynthesis; chorismate biosynthesis; chorismate from D-erythrose 4-phosphate and phosphoenolpyruvate: step 7/7. Catalyzes the last common step of the biosynthesis of aromatic amino acids, produced via the shikimic acid pathway. This chain is Chorismate synthase, chloroplastic, found in Capnoides sempervirens (Rock-harlequin).